Here is a 183-residue protein sequence, read N- to C-terminus: Protein Syd (183 aa).

This sequence belongs to the Syd family.

The protein resides in the cell inner membrane. Functionally, interacts with the SecY protein in vivo. May bind preferentially to an uncomplexed state of SecY, thus functioning either as a chelating agent for excess SecY in the cell or as a regulatory factor that negatively controls the translocase function. In Idiomarina loihiensis (strain ATCC BAA-735 / DSM 15497 / L2-TR), this protein is Protein Syd.